We begin with the raw amino-acid sequence, 208 residues long: WEB family protein At2g17940 (208 aa).

The stretch at Arg-78–Ser-113 forms a coiled coil.

The protein belongs to the WEB family.

The chain is WEB family protein At2g17940 from Arabidopsis thaliana (Mouse-ear cress).